The following is a 437-amino-acid chain: Succinyl-CoA:cyclohexane-1-carboxylate CoA transferase (437 aa).

221 to 225 (GWGGI) is a binding site for CoA. Residue glutamate 244 is the 5-glutamyl coenzyme A thioester intermediate of the active site. The CoA site is built by leucine 319, glycine 342, and lysine 367.

It belongs to the acetyl-CoA hydrolase/transferase family. In terms of assembly, homodimer.

The enzyme catalyses cyclohexane-1-carboxylate + succinyl-CoA = cyclohexane-1-carbonyl-CoA + succinate. The catalysed reaction is cyclohexane-1-carboxylate + butanoyl-CoA = cyclohexane-1-carbonyl-CoA + butanoate. Acyl-CoA transferase involved in the anaerobic degradation of cyclohexane carboxylic acid (CHC). Catalyzes the activation of CHC to cyclohexane-1-carbonyl-CoA (CHCoA). Benzoic acid and cyclohex-1-ene-1-carboxylic acid can also be used as substrates, but with lower specific activity. Shows highest activity with succinyl-CoA and butanoyl-coA as a CoA donor, and lower activity with crotonyl-CoA, acetyl-CoA, glutaryl-CoA, CH1eneCoA, propionyl-CoA and acetoacetyl-CoA. In vitro, the enzyme can use butanoyl-coA as a CoA donor with greater efficiency than succinyl-CoA. However, succinyl-CoA is the most abundant CoA ester in exponentially grown cells, whereas butanoyl-coA is hardly detectable, indicating that succinyl-CoA is the natural CoA donor for CHC activation. In Geobacter metallireducens (strain ATCC 53774 / DSM 7210 / GS-15), this protein is Succinyl-CoA:cyclohexane-1-carboxylate CoA transferase.